Reading from the N-terminus, the 119-residue chain is Large ribosomal subunit protein bL20 (119 aa).

Belongs to the bacterial ribosomal protein bL20 family.

Its function is as follows. Binds directly to 23S ribosomal RNA and is necessary for the in vitro assembly process of the 50S ribosomal subunit. It is not involved in the protein synthesizing functions of that subunit. This chain is Large ribosomal subunit protein bL20, found in Streptococcus equi subsp. equi (strain 4047).